Here is a 625-residue protein sequence, read N- to C-terminus: Endoglucanase D (625 aa).

The N-terminal stretch at 1–17 is a signal peptide; sequence SLTGVFPSGLIETKVSA. Aspartate 177 (nucleophile) is an active-site residue. Catalysis depends on residues histidine 492 and aspartate 522. Residue glutamate 531 is the Proton donor of the active site. The Dockerin domain maps to 555 to 625; the sequence is NEVLYGDVND…LIRVIEKLPI (71 aa).

The protein belongs to the glycosyl hydrolase 9 (cellulase E) family. Requires Ca(2+) as cofactor.

It carries out the reaction Endohydrolysis of (1-&gt;4)-beta-D-glucosidic linkages in cellulose, lichenin and cereal beta-D-glucans.. In terms of biological role, this enzyme catalyzes the endohydrolysis of 1,4-beta-glucosidic linkages in cellulose, lichenin and cereal beta-D-glucans. The sequence is that of Endoglucanase D (celD) from Acetivibrio thermocellus (Hungateiclostridium thermocellum).